A 337-amino-acid chain; its full sequence is Ornithine carbamoyltransferase, catabolic (337 aa).

Residues 57 to 60 (STRT), glutamine 84, arginine 108, and 135 to 138 (HPTQ) each bind carbamoyl phosphate. L-ornithine is bound by residues asparagine 167, aspartate 231, and 235-236 (SM). Carbamoyl phosphate-binding positions include 272-273 (CL) and arginine 317.

It belongs to the aspartate/ornithine carbamoyltransferase superfamily. OTCase family.

The protein localises to the cytoplasm. The enzyme catalyses carbamoyl phosphate + L-ornithine = L-citrulline + phosphate + H(+). Its pathway is amino-acid degradation; L-arginine degradation via ADI pathway; carbamoyl phosphate from L-arginine: step 2/2. Reversibly catalyzes the transfer of the carbamoyl group from carbamoyl phosphate (CP) to the N(epsilon) atom of ornithine (ORN) to produce L-citrulline. The protein is Ornithine carbamoyltransferase, catabolic (arcB) of Streptococcus pyogenes serotype M1.